A 476-amino-acid chain; its full sequence is Raffinose invertase (476 aa).

Substrate-binding positions include Trp-35 to Asp-38, Gln-54, Phe-97 to Ser-98, Arg-159 to Asp-160, Glu-214, and Trp-297. Residue Asp-38 is part of the active site.

This sequence belongs to the glycosyl hydrolase 32 family. As to quaternary structure, homodimer.

The catalysed reaction is Hydrolysis of terminal non-reducing beta-D-fructofuranoside residues in beta-D-fructofuranosides.. May prevent the potential hasard of excessive sucrose accumulation. The protein is Raffinose invertase (rafD) of Escherichia coli.